The primary structure comprises 478 residues: Lysosome membrane protein 2 (478 aa).

The Cytoplasmic segment spans residues 1–4 (MGRC). A helical transmembrane segment spans residues 5–27 (CFYTAGTLSLLLLVTSVTLLVAR). The Lumenal segment spans residues 28-433 (VFQKAVDQTI…QLKSVINTTL (406 aa)). Asparagine 45, asparagine 68, asparagine 105, and asparagine 122 each carry an N-linked (GlcNAc...) asparagine glycan. Positions 155–191 (LIEAMLKAYQQKLFVIHTVHELLWGYKDEILSLVHIF) are important for interaction with GBA1. Residues asparagine 206, asparagine 224, asparagine 249, and asparagine 304 are each glycosylated (N-linked (GlcNAc...) asparagine). 2 disulfides stabilise this stretch: cysteine 274–cysteine 329 and cysteine 312–cysteine 318. Residues asparagine 325, asparagine 412, and asparagine 430 are each glycosylated (N-linked (GlcNAc...) asparagine). A helical membrane pass occupies residues 434–459 (VVTNIPYIIMALGVFFGLVFTWLACR). Residues 460–478 (GQGSMDEGTADERAPLIRT) lie on the Cytoplasmic side of the membrane.

The protein belongs to the CD36 family. In terms of assembly, interacts with GBA1. Post-translationally, acylated by palmitic acid group(s). In terms of processing, heavily glycosylated. As to expression, detected in the extracts of brain, heart, lung, liver and kidney.

Its subcellular location is the lysosome membrane. Functionally, acts as a lysosomal receptor for glucosylceramidase (GBA1) targeting. This is Lysosome membrane protein 2 (Scarb2) from Mus musculus (Mouse).